The following is a 721-amino-acid chain: Protein quick-to-court (721 aa).

Disordered regions lie at residues Met1–His42, Val143–Ala210, Ser360–Leu379, Asp393–Ser428, and Ser441–Gly471. A compositionally biased stretch (basic and acidic residues) spans Gln17 to His31. A compositionally biased stretch (low complexity) spans Asn161–Pro201. Residues Pro362 to Leu379 show a composition bias toward basic and acidic residues. The segment covering Arg406–Gln420 has biased composition (low complexity). The span at Ser441–Ala454 shows a compositional bias: polar residues. Residues Lys511–Lys569 adopt a coiled-coil conformation. A GRIP domain is found at His668 to Ala716.

In terms of tissue distribution, expressed in the third antennal segment and the maxillary palp, with increased expression near the cuticle of both olfactory organs. Also detected in the second antenna segment. In the brain, expressed in the central nervous system, with high levels of expression in the visual system including the retina and optic lobe, and uniform expression in the cortex. Detected in the thorax and abdomen, with increased expression in the ventral ganglion. In males, detected in the reproductive tract including the ejaculatory bulb and testis.

In adult males, modulates sexual behavior by playing a role in sex discrimination and maintaining normal levels of sexual activity towards both males and females. The sequence is that of Protein quick-to-court from Drosophila melanogaster (Fruit fly).